The sequence spans 292 residues: MAISAKLVKELRERTGAGMMDCKKALTETDGDIDKAIDYLREKGIAKAAKKADRIAAEGLVHVEVKGNEAAIVEINSETDFVARNEGFQELVKEIANQVLDSKAETVDALLETKLSSGKTVDERMKEAISTIGEKLSIRRFEIRTKSDNDAFGAYLHMGGRIGVLTVVEGSTDEEAAKDVAMHIAAINPKYVSSEQVKEEEINHEREVLKQQALNEGKPENIVEKMVEGRLRKYLQEICAVDQNFVKDPDQTVEAFLKSKGGKLVDFVRYEVGEGMEKREENFADEVKGQMK.

The interval 79–82 (TDFV) is involved in Mg(2+) ion dislocation from EF-Tu.

This sequence belongs to the EF-Ts family.

Its subcellular location is the cytoplasm. Associates with the EF-Tu.GDP complex and induces the exchange of GDP to GTP. It remains bound to the aminoacyl-tRNA.EF-Tu.GTP complex up to the GTP hydrolysis stage on the ribosome. The polypeptide is Elongation factor Ts (Staphylococcus haemolyticus (strain JCSC1435)).